A 639-amino-acid chain; its full sequence is Bone morphogenetic protein 1 homolog (639 aa).

An N-terminal signal peptide occupies residues 1-23 (MDLLYYMTVSLLGFILSLTTFIG). A propeptide spanning residues 24–109 (ETTRALSDDV…RAVTARPERR (86 aa)) is cleaved from the precursor. Residues 100 to 305 (RAVTARPERR…IQANLLYKCP (206 aa)) form the Peptidase M12A domain. Asn-122 and Asn-140 each carry an N-linked (GlcNAc...) asparagine glycan. Disulfide bonds link Cys-143/Cys-304, Cys-167/Cys-189, Cys-169/Cys-170, Cys-307/Cys-333, Cys-360/Cys-382, and Cys-420/Cys-446. Zn(2+) is bound at residue His-197. Glu-198 is an active-site residue. Zn(2+) is bound by residues His-201 and His-207. CUB domains follow at residues 307–419 (CGRT…YEAI) and 420–531 (CGGH…DFFK). An N-linked (GlcNAc...) asparagine glycan is attached at Asn-317. A glycan (N-linked (GlcNAc...) asparagine) is linked at Asn-455. Intrachain disulfides connect Cys-473-Cys-495, Cys-536-Cys-548, Cys-544-Cys-557, and Cys-559-Cys-572. One can recognise an EGF-like; calcium-binding domain in the interval 532–573 (EKDECAQPDQGGCMDVCVNTIGSYRCDCRPGYELSSDGRRCE).

The cofactor is Zn(2+). In terms of tissue distribution, ectodermal and primary mesenchyme cells in hatched blastula.

This chain is Bone morphogenetic protein 1 homolog, found in Strongylocentrotus purpuratus (Purple sea urchin).